The following is a 716-amino-acid chain: Polyribonucleotide nucleotidyltransferase (716 aa).

Mg(2+) contacts are provided by Asp486 and Asp492. The 60-residue stretch at 553–612 (PHIYNIKINPEKIKDVIGKGGAVIRALSDETDTKIDISDDGNITIAALSQKSAAFAQQRI) folds into the KH domain. Residues 622–690 (GRIYQGTVTR…RQGRIRLSIK (69 aa)) form the S1 motif domain.

It belongs to the polyribonucleotide nucleotidyltransferase family. As to quaternary structure, component of the RNA degradosome, which is a multiprotein complex involved in RNA processing and mRNA degradation. It depends on Mg(2+) as a cofactor.

The protein resides in the cytoplasm. The enzyme catalyses RNA(n+1) + phosphate = RNA(n) + a ribonucleoside 5'-diphosphate. In terms of biological role, involved in mRNA degradation. Catalyzes the phosphorolysis of single-stranded polyribonucleotides processively in the 3'- to 5'-direction. The polypeptide is Polyribonucleotide nucleotidyltransferase (Hamiltonella defensa subsp. Acyrthosiphon pisum (strain 5AT)).